Consider the following 719-residue polypeptide: Polyribonucleotide nucleotidyltransferase (719 aa).

Mg(2+)-binding residues include Asp491 and Asp497. One can recognise a KH domain in the interval 558–617 (PRMLTIKINPEKIRDVIGKGGATIRALTEETGTQIDISDDGTIVIASVDEAQAKEAQRRI). Residues 627–695 (GQVYDGSVLR…DKGRLRLSVK (69 aa)) form the S1 motif domain.

This sequence belongs to the polyribonucleotide nucleotidyltransferase family. Mg(2+) is required as a cofactor.

The protein localises to the cytoplasm. It catalyses the reaction RNA(n+1) + phosphate = RNA(n) + a ribonucleoside 5'-diphosphate. In terms of biological role, involved in mRNA degradation. Catalyzes the phosphorolysis of single-stranded polyribonucleotides processively in the 3'- to 5'-direction. This is Polyribonucleotide nucleotidyltransferase from Bordetella petrii (strain ATCC BAA-461 / DSM 12804 / CCUG 43448).